The sequence spans 116 residues: Large ribosomal subunit protein bL17 (116 aa).

This sequence belongs to the bacterial ribosomal protein bL17 family. In terms of assembly, part of the 50S ribosomal subunit. Contacts protein L32.

This is Large ribosomal subunit protein bL17 from Gloeobacter violaceus (strain ATCC 29082 / PCC 7421).